Reading from the N-terminus, the 313-residue chain is Methionyl-tRNA formyltransferase (313 aa).

Residue 113-116 (SLLP) coordinates (6S)-5,6,7,8-tetrahydrofolate.

It belongs to the Fmt family.

It carries out the reaction L-methionyl-tRNA(fMet) + (6R)-10-formyltetrahydrofolate = N-formyl-L-methionyl-tRNA(fMet) + (6S)-5,6,7,8-tetrahydrofolate + H(+). In terms of biological role, attaches a formyl group to the free amino group of methionyl-tRNA(fMet). The formyl group appears to play a dual role in the initiator identity of N-formylmethionyl-tRNA by promoting its recognition by IF2 and preventing the misappropriation of this tRNA by the elongation apparatus. The protein is Methionyl-tRNA formyltransferase of Acidithiobacillus ferrooxidans (strain ATCC 23270 / DSM 14882 / CIP 104768 / NCIMB 8455) (Ferrobacillus ferrooxidans (strain ATCC 23270)).